Reading from the N-terminus, the 253-residue chain is Adenosylcobinamide-GDP ribazoletransferase (253 aa).

4 helical membrane-spanning segments follow: residues 33 to 53 (ISPI…YLIL), 106 to 126 (VGSG…VALL), 132 to 152 (LYTI…SLYI), and 178 to 198 (ILLL…FIIF).

This sequence belongs to the CobS family. The cofactor is Mg(2+).

The protein localises to the cell membrane. It catalyses the reaction alpha-ribazole + adenosylcob(III)inamide-GDP = adenosylcob(III)alamin + GMP + H(+). It carries out the reaction alpha-ribazole 5'-phosphate + adenosylcob(III)inamide-GDP = adenosylcob(III)alamin 5'-phosphate + GMP + H(+). The protein operates within cofactor biosynthesis; adenosylcobalamin biosynthesis; adenosylcobalamin from cob(II)yrinate a,c-diamide: step 7/7. Its function is as follows. Joins adenosylcobinamide-GDP and alpha-ribazole to generate adenosylcobalamin (Ado-cobalamin). Also synthesizes adenosylcobalamin 5'-phosphate from adenosylcobinamide-GDP and alpha-ribazole 5'-phosphate. This Saccharolobus solfataricus (strain ATCC 35092 / DSM 1617 / JCM 11322 / P2) (Sulfolobus solfataricus) protein is Adenosylcobinamide-GDP ribazoletransferase.